Consider the following 317-residue polypeptide: L-lactate dehydrogenase 1 (317 aa).

NAD(+) contacts are provided by residues Val17, Asp38, Lys43, Tyr69, and 83 to 84 (GA). Residues Gln86 and Arg92 each coordinate substrate. NAD(+)-binding positions include Ser105, 122-124 (ATN), and Ser147. 124 to 127 (NPVD) lines the substrate pocket. Residue 152–155 (DSAR) coordinates substrate. The Proton acceptor role is filled by His179. Tyr223 carries the phosphotyrosine modification. Thr232 serves as a coordination point for substrate.

This sequence belongs to the LDH/MDH superfamily. LDH family. As to quaternary structure, homotetramer.

The protein localises to the cytoplasm. It carries out the reaction (S)-lactate + NAD(+) = pyruvate + NADH + H(+). Its pathway is fermentation; pyruvate fermentation to lactate; (S)-lactate from pyruvate: step 1/1. Its function is as follows. Catalyzes the conversion of lactate to pyruvate (Potential). Appears to be the primary factor that allows S.aureus growth during nitrosative stress in both aerobically and anaerobically cultured cells. The protein is L-lactate dehydrogenase 1 of Staphylococcus aureus (strain JH1).